Here is a 145-residue protein sequence, read N- to C-terminus: Maximins 3/H9 type 1 (145 aa).

Positions 1-18 are cleaved as a signal peptide; that stretch reads MNFKYIVAVSFLIASAYA. Propeptides lie at residues 19 to 43 and 74 to 124; these read RSVQ…LREI and RTAE…KEKR. At isoleucine 144 the chain carries Isoleucine amide.

Belongs to the bombinin family. In terms of tissue distribution, expressed by the skin glands.

It localises to the secreted. Functionally, maximin-3 shows antibacterial activity against both Gram-positive and Gram-negative bacteria. It also shows antimicrobial activity against the fungus C.albicans, but not against A.flavus nor P.uticale. It has little hemolytic activity. It possess a significant cytotoxicity against tumor cell lines. It possess a significant anti-HIV activity. It shows high spermicidal activity. Maximin-H9 shows antimicrobial activity against bacteria and against the fungus C.albicans. Shows strong hemolytic activity. This is Maximins 3/H9 type 1 from Bombina maxima (Giant fire-bellied toad).